A 342-amino-acid chain; its full sequence is Trace amine-associated receptor 8 (342 aa).

The Extracellular segment spans residues 1–31; that stretch reads MTSNFSQPVVQLCYEDVNGSCIETPYSPGSR. N-linked (GlcNAc...) asparagine glycosylation is found at asparagine 4 and asparagine 18. 2 disulfides stabilise this stretch: cysteine 21–cysteine 185 and cysteine 104–cysteine 189. The chain crosses the membrane as a helical span at residues 32–52; sequence VILYTAFSFGSLLAVFGNLLV. Residues 53–67 are Cytoplasmic-facing; sequence MTSVLHFKQLHSPTN. The chain crosses the membrane as a helical span at residues 68-88; it reads FLIASLACADFLVGVTVMLFS. Residues 89 to 111 lie on the Extracellular side of the membrane; the sequence is MVRTVESCWYFGAKFCTLHSCCD. The chain crosses the membrane as a helical span at residues 112-132; sequence VAFCYSSVLHLCFICIDRYIV. Over 133–146 the chain is Cytoplasmic; sequence VTDPLVYATKFTVS. Residues 147–167 form a helical membrane-spanning segment; the sequence is VSGICISVSWILPLTYSGAVF. The Extracellular portion of the chain corresponds to 168–195; sequence YTGVNDDGLEELVSALNCVGGCQIIVSQ. A helical membrane pass occupies residues 196–216; sequence GWVLIDFLLFFIPTLVMIILY. Over 217-258 the chain is Cytoplasmic; the sequence is SKIFLIAKQQAIKIETTSSKVESSSESYKIRVAKRERKAAKT. Residues 259–279 traverse the membrane as a helical segment; sequence LGVTVLAFVISWLPYTVDILI. Position 280 (aspartate 280) is a topological domain, extracellular. A helical transmembrane segment spans residues 281–301; sequence AFMGFLTPAYIYEICCWSAYY. The Cytoplasmic segment spans residues 302 to 342; that stretch reads NSAMNPLIYALFYPWFRKAIKLILSGDVLKASSSTISLFLE.

Belongs to the G-protein coupled receptor 1 family. As to expression, expressed in kidney and amygdala. Not expressed in other tissues or brain regions tested.

Its subcellular location is the cell membrane. In terms of biological role, olfactory receptor specific for trace amines. Trace amine compounds are enriched in animal body fluids and act on trace amine-associated receptors (TAARs) to elicit both intraspecific and interspecific innate behaviors. Ligand-binding causes a conformation change that triggers signaling via G alpha proteins, possibly G(i)/G(o) G alpha proteins. The sequence is that of Trace amine-associated receptor 8 (TAAR8) from Homo sapiens (Human).